Here is a 600-residue protein sequence, read N- to C-terminus: DDB1- and CUL4-associated factor 8-like protein 1 (600 aa).

The segment at 1–122 (MSHQEGSTGG…EEEQPRMCPR (122 aa)) is disordered. Acidic residues-rich tracts occupy residues 74-83 (SSSEDVELES) and 96-115 (EETEREEEEEEMEEEGEEEE). WD repeat units follow at residues 194-233 (SHAGSVSTIHFNQRGTRLASSGDDLRVIVWDWVRQKPVLN), 237-278 (GHDI…YCEN), 284-324 (KHRG…PASK), 332-372 (DKKV…KKEN), 388-427 (DFPTNITCVVYSHDGTELLASYNDEDIYLFNSSLSDGAQY), 435-475 (RNND…IIQF), and 479-518 (DRGDIVNCLEPHPYLPVLATSGLDQHVRIWTPTAKTATEL). The interval 562–600 (PGWRDHGAEFPDEEELDESSSTSDTSEEEGQDRVQCIPS) is disordered.

This sequence belongs to the WD repeat DCAF8 family.

The sequence is that of DDB1- and CUL4-associated factor 8-like protein 1 (DCAF8L1) from Homo sapiens (Human).